The following is a 57-amino-acid chain: Large ribosomal subunit protein bL32 (57 aa).

The protein belongs to the bacterial ribosomal protein bL32 family.

In Lysinibacillus sphaericus (strain C3-41), this protein is Large ribosomal subunit protein bL32.